The following is a 212-amino-acid chain: Peptide methionine sulfoxide reductase MsrA (212 aa).

Cys52 is a catalytic residue.

This sequence belongs to the MsrA Met sulfoxide reductase family.

It catalyses the reaction L-methionyl-[protein] + [thioredoxin]-disulfide + H2O = L-methionyl-(S)-S-oxide-[protein] + [thioredoxin]-dithiol. It carries out the reaction [thioredoxin]-disulfide + L-methionine + H2O = L-methionine (S)-S-oxide + [thioredoxin]-dithiol. Its function is as follows. Has an important function as a repair enzyme for proteins that have been inactivated by oxidation. Catalyzes the reversible oxidation-reduction of methionine sulfoxide in proteins to methionine. This Escherichia coli (strain ATCC 8739 / DSM 1576 / NBRC 3972 / NCIMB 8545 / WDCM 00012 / Crooks) protein is Peptide methionine sulfoxide reductase MsrA.